Reading from the N-terminus, the 520-residue chain is Aspartate-proton symporter (520 aa).

14 consecutive transmembrane segments (helical) span residues 13-33 (LFDLILIGMGAIFGSAWLFAV), 49-69 (ILGGAIILLIGLVYAELGAAL), 85-105 (HLVGYLISFVTIVAYTSLISI), 130-150 (TISGWILQFALLCLFFLLNYW), 161-181 (IISIFKYIVPITIIIVLIFHF), 201-221 (AAISTGGVMFAYLGLHPIVSV), 232-252 (IPIALIICIIVSTIIYTVLQV), 281-301 (IAVMLGLGWLATLVILDAILS), 345-365 (WLSFALSIFWTLPFPSWNALV), 366-386 (NVCSVALILSYAIAPISSAAL), 402-422 (MSIIGPLSFIFTAFIVYWSGW), 425-445 (VSWLLGSQLVMFLIYLCFSKY), 460-480 (AWWLIGFYIMMLIFSYIGSFG), and 482-502 (GLGIISNPVDLILVAIGSLAI).

This sequence belongs to the amino acid-polyamine-organocation (APC) superfamily. AGT (TC 2.A.3.11) family.

It is found in the cell membrane. Functionally, uptake of L-aspartate with the concomitant import of a proton. Can also transport aspartate hydroxamate and L-glutamate with lower affinity and efficiency. This chain is Aspartate-proton symporter (yveA), found in Bacillus subtilis (strain 168).